Reading from the N-terminus, the 156-residue chain is MGFTDKQEALVRDSWEFMKQDIPQLSLRFFSLILEIAPVAKNMFSFLKDSDELPENNPKLRAHAVKVFKMTCESAIQLREKGEVVVGETTLKYLGSIHLQKRVADPHFEVVKEALLRTVKEATGNKWKDEMKEAWSEAYDQLASAIKAEMHAEAAA.

Positions 2-151 constitute a Globin domain; the sequence is GFTDKQEALV…LASAIKAEMH (150 aa). The Homodimerization signature appears at 35–39; it reads EIAPV. Heme b-binding residues include Ser45, Lys59, His63, and His98. The Homodimerization signature appears at 105–117; the sequence is DPHFEVVKEALLR.

This sequence belongs to the plant globin family. In terms of assembly, homodimer. It depends on heme b as a cofactor.

The protein localises to the cytoplasm. Its subcellular location is the nucleus. The enzyme catalyses Fe(III)-heme b-[protein] + nitric oxide + H2O = Fe(II)-heme b-[protein] + nitrite + 2 H(+). Functionally, phytoglobin that reduces nitrite to nitric oxide (NO) under anoxic conditions (e.g. during flooding or in waterlogged soil). May not function as an oxygen storage or transport protein. Has an unusually high affinity for O(2) through an hexacoordinate heme iron because of a very low dissociation constant. This Solanum lycopersicum (Tomato) protein is Anaerobic nitrite reductase HB2.